The sequence spans 264 residues: Putative HTH-type transcriptional regulator TrmBL2 (264 aa).

The H-T-H motif DNA-binding region spans 33–54; the sequence is LTPAELASVSEVPAPRTYDVLR.

Belongs to the transcriptional regulator TrmB family.

Its function is as follows. Binds to the maltodextrin transport gene cluster (mdxE operon) promoter and to some other TGM (Thermococcales-Glycolytic-Motif) sequences, but not exclusively. This Pyrococcus furiosus (strain ATCC 43587 / DSM 3638 / JCM 8422 / Vc1) protein is Putative HTH-type transcriptional regulator TrmBL2 (trmBL2).